The chain runs to 731 residues: Endopolyphosphatase (731 aa).

Over 1–4 the chain is Cytoplasmic; sequence MSLS. The helical; Signal-anchor for type II membrane protein transmembrane segment at 5-25 threads the bilayer; that stretch reads RCILGLACLWHGVIASPLGAV. At 26–731 the chain is on the vacuolar side; it reads PSNIPIATDL…VEKEDLKKFT (706 aa). The N-linked (GlcNAc...) asparagine glycan is linked to N106. Residues 375–403 are disordered; sequence KLQPPPTDSKNSGQLKKGKKGRKGKKKKP. The span at 390 to 402 shows a compositional bias: basic residues; the sequence is KKGKKGRKGKKKK. A glycan (N-linked (GlcNAc...) asparagine) is linked at N433. The segment at 456–522 is disordered; that stretch reads EQNDRQKHLD…PPGPAYSPQP (67 aa). 2 stretches are compositionally biased toward basic and acidic residues: residues 457–474 and 492–501; these read QNDR…PSHM and GGDSKPKKPD. The segment covering 505-519 has biased composition (pro residues); that stretch reads PHPPAKSSPPGPAYS. Residues N534 and N540 are each glycosylated (N-linked (GlcNAc...) asparagine). The segment at 626 to 706 is disordered; sequence AKSIDVSYES…HKKKKGKKRQ (81 aa). Over residues 636–686 the composition is skewed to acidic residues; the sequence is AAEEEEEEEEEEEEDLFEEVEETDEEEEQEDDDLSDGEEVDDDSDEDELET. Over residues 691-706 the composition is skewed to basic residues; the sequence is KHDKKKHKKKKGKKRQ.

This sequence belongs to the endopolyphosphatase PPN1 family. The cofactor is a divalent metal cation. Processing by proteases in the vacuole may be required for activation.

It localises to the vacuole membrane. The enzyme catalyses [phosphate](n+1) + n H2O = (n+1) phosphate + n H(+). In terms of biological role, catalyzes the hydrolysis of inorganic polyphosphate (polyP) chains of many hundreds of phosphate residues into shorter lengths. The polypeptide is Endopolyphosphatase (epp-1) (Neurospora crassa (strain ATCC 24698 / 74-OR23-1A / CBS 708.71 / DSM 1257 / FGSC 987)).